Consider the following 598-residue polypeptide: Arginine--tRNA ligase (598 aa).

A 'HIGH' region motif is present at residues A140 to H150.

It belongs to the class-I aminoacyl-tRNA synthetase family. In terms of assembly, monomer.

It is found in the cytoplasm. The catalysed reaction is tRNA(Arg) + L-arginine + ATP = L-arginyl-tRNA(Arg) + AMP + diphosphate. This Synechococcus sp. (strain JA-3-3Ab) (Cyanobacteria bacterium Yellowstone A-Prime) protein is Arginine--tRNA ligase.